The following is a 139-amino-acid chain: Large ribosomal subunit protein uL16 (139 aa).

This sequence belongs to the universal ribosomal protein uL16 family. As to quaternary structure, part of the 50S ribosomal subunit.

In terms of biological role, binds 23S rRNA and is also seen to make contacts with the A and possibly P site tRNAs. This Synechocystis sp. (strain ATCC 27184 / PCC 6803 / Kazusa) protein is Large ribosomal subunit protein uL16.